The primary structure comprises 490 residues: Bifunctional protein GlmU (490 aa).

The interval 1–241 is pyrophosphorylase; that stretch reads MSSPGDTAVL…SALVAGVNNR (241 aa). UDP-N-acetyl-alpha-D-glucosamine is bound by residues 12 to 15, Lys26, Gln83, 88 to 89, 112 to 114, Gly151, Glu166, Asn181, and Asn239; these read LAAG, GT, and SGD. Asp114 is a Mg(2+) binding site. A Mg(2+)-binding site is contributed by Asn239. Residues 242–262 form a linker region; sequence VQLAQLGAELNRRIVAAHQLA. The interval 263–490 is N-acetyltransferase; sequence GVTVVDPATT…AGGRPAGEAE (228 aa). Arg344 and Lys362 together coordinate UDP-N-acetyl-alpha-D-glucosamine. The active-site Proton acceptor is the His374. Tyr377 and Asn388 together coordinate UDP-N-acetyl-alpha-D-glucosamine. Acetyl-CoA is bound by residues Ala391, 397 to 398, Ser416, and Ala434; that span reads NY. Positions 462-490 are disordered; that stretch reads RRKRPGSAAARAAEAAEKAAGGRPAGEAE. Residues 467-490 show a composition bias toward low complexity; it reads GSAAARAAEAAEKAAGGRPAGEAE.

The protein in the N-terminal section; belongs to the N-acetylglucosamine-1-phosphate uridyltransferase family. This sequence in the C-terminal section; belongs to the transferase hexapeptide repeat family. As to quaternary structure, homotrimer. Requires Mg(2+) as cofactor.

The protein resides in the cytoplasm. The enzyme catalyses alpha-D-glucosamine 1-phosphate + acetyl-CoA = N-acetyl-alpha-D-glucosamine 1-phosphate + CoA + H(+). It catalyses the reaction N-acetyl-alpha-D-glucosamine 1-phosphate + UTP + H(+) = UDP-N-acetyl-alpha-D-glucosamine + diphosphate. It functions in the pathway nucleotide-sugar biosynthesis; UDP-N-acetyl-alpha-D-glucosamine biosynthesis; N-acetyl-alpha-D-glucosamine 1-phosphate from alpha-D-glucosamine 6-phosphate (route II): step 2/2. It participates in nucleotide-sugar biosynthesis; UDP-N-acetyl-alpha-D-glucosamine biosynthesis; UDP-N-acetyl-alpha-D-glucosamine from N-acetyl-alpha-D-glucosamine 1-phosphate: step 1/1. Its pathway is bacterial outer membrane biogenesis; LPS lipid A biosynthesis. Its function is as follows. Catalyzes the last two sequential reactions in the de novo biosynthetic pathway for UDP-N-acetylglucosamine (UDP-GlcNAc). The C-terminal domain catalyzes the transfer of acetyl group from acetyl coenzyme A to glucosamine-1-phosphate (GlcN-1-P) to produce N-acetylglucosamine-1-phosphate (GlcNAc-1-P), which is converted into UDP-GlcNAc by the transfer of uridine 5-monophosphate (from uridine 5-triphosphate), a reaction catalyzed by the N-terminal domain. In Mycolicibacterium paratuberculosis (strain ATCC BAA-968 / K-10) (Mycobacterium paratuberculosis), this protein is Bifunctional protein GlmU.